Here is a 569-residue protein sequence, read N- to C-terminus: Rab GTPase-binding effector protein 2 (569 aa).

Disordered stretches follow at residues 1 to 41 (MAAA…GELS), 180 to 265 (IQRR…ETAS), and 388 to 411 (RAEQ…ESLP). Alanine 2 is subject to N-acetylalanine. A coiled-coil region spans residues 34–187 (EAESGELSRL…QEIQRRPRHA (154 aa)). Residues serine 189 and serine 193 each carry the phosphoserine modification. At serine 200 the chain carries Phosphoserine; by GSK3-alpha. Serine 204 carries the phosphoserine modification. Low complexity-rich tracts occupy residues 245–257 (SSSS…QGLS) and 393–403 (PSSAPQGSQQE). Positions 289-523 (DTQWEQLQTE…LQAELETSEQ (235 aa)) form a coiled coil.

Belongs to the rabaptin family. As to quaternary structure, heterodimer with RABGEF1. The dimer binds RAB5A that has been activated by GTP-binding. Interacts with SDCCAG8; this interaction is important for ciliogenesis regulation. Interacts with RAB4A; this interaction may mediate VEGFR2 cell surface expression.

Its subcellular location is the cytoplasm. It is found in the early endosome. It localises to the cytoskeleton. The protein resides in the microtubule organizing center. The protein localises to the centrosome. Its subcellular location is the cilium basal body. In terms of biological role, plays a role in membrane trafficking and in homotypic early endosome fusion. Participates in arteriogenesis by regulating vascular endothelial growth factor receptor 2/VEGFR2 cell surface expression and endosomal trafficking. By interacting with SDCCAG8, localizes to centrosomes and plays a critical role in ciliogenesis. The polypeptide is Rab GTPase-binding effector protein 2 (RABEP2) (Homo sapiens (Human)).